We begin with the raw amino-acid sequence, 451 residues long: PTS system galactose-specific EIIC component (451 aa).

Residues 8-427 (LNKTLMPLAS…VLNVLIYYPF (420 aa)) enclose the PTS EIIC type-3 domain. A run of 11 helical transmembrane segments spans residues 40-60 (LGIALLTIIGYFPVPAWVDFL), 69-89 (FSAVIGAVTSALAIYVTYNFA), 104-124 (GLLSIASLLMLMPQIITVPVV), 151-171 (TGSTGLIVAIIIGFIVSLVYI), 190-210 (VVDSLSPAIISMVIFCLMFGI), 239-259 (ANPWVLMGIFTFGNFLWFFGI), 263-283 (LIGGILNPLLLTMSYANIDAY), 296-316 (IVFAVGANAWGGSGNTYGLVI), 332-352 (LGAIPSIFNISEPLLFGLPMM), 356-376 (LFFIPLVFQPAILGTVALGLA), and 403-423 (ISGGLPFLIIFAICLVLNVLI).

It is found in the cell membrane. Its function is as follows. The phosphoenolpyruvate-dependent sugar phosphotransferase system (PTS), a major carbohydrate active transport system, catalyzes the phosphorylation of incoming sugar substrates concomitant with their translocation across the cell membrane. Involved in galactose transport with PtcA and PtcB. The protein is PTS system galactose-specific EIIC component of Lactococcus lactis subsp. cremoris (strain MG1363).